We begin with the raw amino-acid sequence, 1378 residues long: DNA-directed RNA polymerase subunit beta (1378 aa).

It belongs to the RNA polymerase beta chain family. In terms of assembly, the RNAP catalytic core consists of 2 alpha, 1 beta, 1 beta' and 1 omega subunit. When a sigma factor is associated with the core the holoenzyme is formed, which can initiate transcription.

It catalyses the reaction RNA(n) + a ribonucleoside 5'-triphosphate = RNA(n+1) + diphosphate. In terms of biological role, DNA-dependent RNA polymerase catalyzes the transcription of DNA into RNA using the four ribonucleoside triphosphates as substrates. The polypeptide is DNA-directed RNA polymerase subunit beta (Hyphomonas neptunium (strain ATCC 15444)).